The primary structure comprises 231 residues: Large ribosomal subunit protein uL1 (231 aa).

It belongs to the universal ribosomal protein uL1 family. In terms of assembly, part of the 50S ribosomal subunit.

In terms of biological role, binds directly to 23S rRNA. The L1 stalk is quite mobile in the ribosome, and is involved in E site tRNA release. Its function is as follows. Protein L1 is also a translational repressor protein, it controls the translation of the L11 operon by binding to its mRNA. The chain is Large ribosomal subunit protein uL1 from Legionella pneumophila (strain Paris).